An 84-amino-acid chain; its full sequence is Small ribosomal subunit protein uS17 (84 aa).

Belongs to the universal ribosomal protein uS17 family. Part of the 30S ribosomal subunit.

One of the primary rRNA binding proteins, it binds specifically to the 5'-end of 16S ribosomal RNA. This Alkaliphilus oremlandii (strain OhILAs) (Clostridium oremlandii (strain OhILAs)) protein is Small ribosomal subunit protein uS17.